A 151-amino-acid polypeptide reads, in one-letter code: SsrA-binding protein (151 aa).

Belongs to the SmpB family.

Its subcellular location is the cytoplasm. Required for rescue of stalled ribosomes mediated by trans-translation. Binds to transfer-messenger RNA (tmRNA), required for stable association of tmRNA with ribosomes. tmRNA and SmpB together mimic tRNA shape, replacing the anticodon stem-loop with SmpB. tmRNA is encoded by the ssrA gene; the 2 termini fold to resemble tRNA(Ala) and it encodes a 'tag peptide', a short internal open reading frame. During trans-translation Ala-aminoacylated tmRNA acts like a tRNA, entering the A-site of stalled ribosomes, displacing the stalled mRNA. The ribosome then switches to translate the ORF on the tmRNA; the nascent peptide is terminated with the 'tag peptide' encoded by the tmRNA and targeted for degradation. The ribosome is freed to recommence translation, which seems to be the essential function of trans-translation. In Geotalea uraniireducens (strain Rf4) (Geobacter uraniireducens), this protein is SsrA-binding protein.